The following is a 77-amino-acid chain: uncharacterized protein (77 aa).

Residues 56-77 (SVIPKQQPPSSAAAISESEFED) are disordered. The span at 65–77 (SSAAAISESEFED) shows a compositional bias: low complexity.

This is an uncharacterized protein from Frog virus 3 (isolate Goorha) (FV-3).